We begin with the raw amino-acid sequence, 526 residues long: Dolichyl pyrophosphate Glc1Man9GlcNAc2 alpha-1,3-glucosyltransferase (526 aa).

11 consecutive transmembrane segments (helical) span residues 9-29, 108-128, 143-163, 188-208, 238-258, 334-354, 361-380, 400-422, 427-449, 461-481, and 487-507; these read AGGH…CLLI, FSVI…CKCI, FILS…HIHF, GALL…VAPA, VTSL…PFLA, PLAT…CLWF, GFLR…GWHV, AGDA…PLLF, LPIK…KTLF, TVYL…LPFT, and YPFI…TYAW.

This sequence belongs to the ALG6/ALG8 glucosyltransferase family.

The protein localises to the endoplasmic reticulum membrane. It catalyses the reaction an alpha-D-Glc-(1-&gt;3)-alpha-D-Man-(1-&gt;2)-alpha-D-Man-(1-&gt;2)-alpha-D-Man-(1-&gt;3)-[alpha-D-Man-(1-&gt;2)-alpha-D-Man-(1-&gt;3)-[alpha-D-Man-(1-&gt;2)-alpha-D-Man-(1-&gt;6)]-alpha-D-Man-(1-&gt;6)]-beta-D-Man-(1-&gt;4)-beta-D-GlcNAc-(1-&gt;4)-alpha-D-GlcNAc-diphospho-di-trans,poly-cis-dolichol + a di-trans,poly-cis-dolichyl beta-D-glucosyl phosphate = an alpha-D-Glc-(1-&gt;3)-alpha-D-Glc-(1-&gt;3)-alpha-D-Man-(1-&gt;2)-alpha-D-Man-(1-&gt;2)-alpha-D-Man-(1-&gt;3)-[alpha-D-Man-(1-&gt;2)-alpha-D-Man-(1-&gt;3)-[alpha-D-Man-(1-&gt;2)-alpha-D-Man-(1-&gt;6)]-alpha-D-Man-(1-&gt;6)]-beta-D-Man-(1-&gt;4)-beta-D-GlcNAc-(1-&gt;4)-alpha-D-GlcNAc-diphospho-di-trans,poly-cis-dolichol + a di-trans,poly-cis-dolichyl phosphate + H(+). It participates in protein modification; protein glycosylation. Functionally, dolichyl pyrophosphate Glc1Man9GlcNAc2 alpha-1,3-glucosyltransferase that operates in the biosynthetic pathway of dolichol-linked oligosaccharides, the glycan precursors employed in protein asparagine (N)-glycosylation. The assembly of dolichol-linked oligosaccharides begins on the cytosolic side of the endoplasmic reticulum membrane and finishes in its lumen. The sequential addition of sugars to dolichol pyrophosphate produces dolichol-linked oligosaccharides containing fourteen sugars, including two GlcNAcs, nine mannoses and three glucoses. Once assembled, the oligosaccharide is transferred from the lipid to nascent proteins by oligosaccharyltransferases. In the lumen of the endoplasmic reticulum, adds the second glucose residue from dolichyl phosphate glucose (Dol-P-Glc) onto the lipid-linked oligosaccharide intermediate Glc(1)Man(9)GlcNAc(2)-PP-Dol to produce Glc(2)Man(9)GlcNAc(2)-PP-Dol. Glc(2)Man(9)GlcNAc(2)-PP-Dol is a substrate for ALG10, the following enzyme in the biosynthetic pathway. Required for PKD1/Polycystin-1 maturation and localization to the plasma membrane of the primary cilia. The protein is Dolichyl pyrophosphate Glc1Man9GlcNAc2 alpha-1,3-glucosyltransferase of Mus musculus (Mouse).